The primary structure comprises 41 residues: Omega-theraphotoxin-Hg1a (41 aa).

Disulfide bonds link Cys7-Cys21, Cys14-Cys26, and Cys20-Cys33.

The protein belongs to the neurotoxin 10 (Hwtx-1) family. 56 (SNX-482) subfamily. In terms of tissue distribution, expressed by the venom gland.

The protein localises to the secreted. Toxin that blocks vertebrate P/Q-type (Cav2.1/CACNA1A) and R-type (Cav2.3/CACNA1E) voltage-gated calcium channels. Also inhibits sodium channels (Nav) in bovine chromaffin cells by delaying sodium channel inactivation. The chain is Omega-theraphotoxin-Hg1a from Hysterocrates gigas (Cameroon red baboon tarantula).